The primary structure comprises 310 residues: B3 domain-containing protein At4g02870 (310 aa).

The segment covering 1–21 (MTLSDDPISPSTQESSNSSYV) has biased composition (polar residues). The segment at 1–39 (MTLSDDPISPSTQESSNSSYVRSKEAEKNSPSQETDEEV) is disordered. Positions 205 to 300 (RCGRLILQSS…RLQFGVISRN (96 aa)) form a DNA-binding region, TF-B3.

The protein resides in the nucleus. This Arabidopsis thaliana (Mouse-ear cress) protein is B3 domain-containing protein At4g02870 (ARF42).